A 279-amino-acid polypeptide reads, in one-letter code: MQNVLTQRLTNDEQQKTLKTLIEKNLEIKTMNKFDIENLDLYYGENQALKAINLPIPVRQVTALIGPSGCGKSTLLRCLNRMNDLIEGVKITGKLAMDGEDIYGNVDVADLRIKVGMVFQKPNPFPMSIYENVAYGLRAQGIKDKKHIDEVVERSLRGAALWDEVKDRLKSHAFGLSGGQQQRLCIARTIAMEPDVILMDEPTSALDPIATHKIEELMEELKKNYTIVIVTHSMQQARRISDRTAFFLMGELVEHNDTQVIFSEPSDDRTRGYVNGDFG.

The ABC transporter domain maps to 34–274 (FDIENLDLYY…PSDDRTRGYV (241 aa)). Residue 66 to 73 (GPSGCGKS) participates in ATP binding.

The protein belongs to the ABC transporter superfamily. Phosphate importer (TC 3.A.1.7) family. The complex is composed of two ATP-binding proteins (PstB), two transmembrane proteins (PstC and PstA) and a solute-binding protein (PstS).

The protein resides in the cell inner membrane. The catalysed reaction is phosphate(out) + ATP + H2O = ADP + 2 phosphate(in) + H(+). Functionally, part of the ABC transporter complex PstSACB involved in phosphate import. Responsible for energy coupling to the transport system. The sequence is that of Phosphate import ATP-binding protein PstB 2 from Vibrio vulnificus (strain YJ016).